A 260-amino-acid chain; its full sequence is Methylphosphonate hydroxylase (260 aa).

K107 is a 2-oxoglutarate binding site. Residues H117, D119, and H195 each coordinate Fe cation.

It belongs to the PhyH family. Fe(2+) serves as cofactor.

It catalyses the reaction methylphosphonate + 2-oxoglutarate + O2 = hydroxymethylphosphonate + succinate + CO2. Its function is as follows. Part of an oxidative pathway for utilization of methylphosphonic acid as a phosphate source. Catalyzes the conversion of methylphosphonic acid to hydroxymethylphosphonic acid. Is specific for the hydroxylation of methylphosphonate. The polypeptide is Methylphosphonate hydroxylase (Gimesia maris (strain ATCC 29201 / DSM 8797 / 534-30) (Planctomyces maris)).